Reading from the N-terminus, the 185-residue chain is MAAQKDQQKDAEAEGLSGTTLLPKLIPSGAGREWLERRRATIRPWSTFVDQQRFSRPRNLGELCQRLVRNVEYYQSNYVFVFLGLILYCVVTSPMLLVALAVFFGACYILYLRTLESKLVLFGREVSPAHQYALAGGISFPFFWLAGAGSAVFWVLGATLVVIGSHAAFHQIEAVDGEELQMEPV.

Over 1–78 (MAAQKDQQKD…RNVEYYQSNY (78 aa)) the chain is Cytoplasmic. Residues 30-54 (AGREWLERRRATIRPWSTFVDQQRF) form a required for interaction with prenylated RAB3A and VAMP2 region. Transmembrane regions (helical) follow at residues 79–94 (VFVF…VTSP) and 95–112 (MLLV…ILYL). At 113 to 131 (RTLESKLVLFGREVSPAHQ) the chain is on the cytoplasmic side. The next 2 membrane-spanning stretches (helical) occupy residues 132-148 (YALA…LAGA) and 149-165 (GSAV…VIGS). The segment at 165-185 (SHAAFHQIEAVDGEELQMEPV) is required for interaction with GDI1. Residues 166–185 (HAAFHQIEAVDGEELQMEPV) are Cytoplasmic-facing. The tract at residues 175–185 (VDGEELQMEPV) is required for interaction with prenylated RAB3A and VAMP2. Residues 175-185 (VDGEELQMEPV) form a homodimerization region.

This sequence belongs to the PRA1 family. As to quaternary structure, homodimer. Interacts with VAMP2 (synaptobrevin-2), GDI1, and PCLO. Interacts specifically with prenylated Rab proteins; strongly with RAB4B, RAB5A and RAB5C, and weakly with RAB4A, RAB6, RAB7A, RAB17 and RAB22. Interacts with NDRG1. As to expression, ubiquitous. Strongest expression found in placenta, pituitary gland, kidney, lung and stomach.

Its subcellular location is the cell membrane. The protein resides in the cytoplasm. The protein localises to the golgi apparatus. It is found in the cytoplasmic vesicle. It localises to the secretory vesicle. Its subcellular location is the synaptic vesicle. In terms of biological role, general Rab protein regulator required for vesicle formation from the Golgi complex. May control vesicle docking and fusion by mediating the action of Rab GTPases to the SNARE complexes. In addition it inhibits the removal of Rab GTPases from the membrane by GDI. This chain is Prenylated Rab acceptor protein 1 (RABAC1), found in Homo sapiens (Human).